Reading from the N-terminus, the 465-residue chain is UDP-N-acetylmuramoylalanine--D-glutamate ligase (465 aa).

127 to 133 (GSNGKST) provides a ligand contact to ATP.

This sequence belongs to the MurCDEF family.

The protein localises to the cytoplasm. The enzyme catalyses UDP-N-acetyl-alpha-D-muramoyl-L-alanine + D-glutamate + ATP = UDP-N-acetyl-alpha-D-muramoyl-L-alanyl-D-glutamate + ADP + phosphate + H(+). It participates in cell wall biogenesis; peptidoglycan biosynthesis. In terms of biological role, cell wall formation. Catalyzes the addition of glutamate to the nucleotide precursor UDP-N-acetylmuramoyl-L-alanine (UMA). In Cereibacter sphaeroides (strain KD131 / KCTC 12085) (Rhodobacter sphaeroides), this protein is UDP-N-acetylmuramoylalanine--D-glutamate ligase.